The primary structure comprises 180 residues: MNLLLLAMGLILPRRPHALHMGPGDPNFDEKLVKGKWFSVALASNEPKFIAKDTDMKFFIHKIQVTPESLQFHFHRKVRGMCVPTMMTAHKTKKKFQYTVNHSGHKTIFLEKVDPKHFVIFCAHSMKHGKETVVVTLFSRTPTVSPDVMWMFKKYCKTHGIHTSNIVDLTQTDRCLHARH.

A signal peptide spans 1–18; it reads MNLLLLAMGLILPRRPHA. An intrachain disulfide couples C82 to C175. N101 is a glycosylation site (N-linked (GlcNAc...) asparagine).

It belongs to the calycin superfamily. Lipocalin family. In terms of tissue distribution, expressed in glandular and lumenal epithelia of the endometrium. Is transferred to the embryonic capsule, the conceptus and the yolk sac.

The protein localises to the secreted. In terms of biological role, binds fatty acids and retinol. Is specialized for the preattachment embryo. May be important to maintain the pregnancy and may transport small hydrophobic ligands from mother to the developing embryo. This Equus caballus (Horse) protein is Uterocalin.